The chain runs to 532 residues: Phosphoenolpyruvate carboxykinase (ATP) (532 aa).

Substrate is bound by residues arginine 58, tyrosine 194, and lysine 200. ATP contacts are provided by residues lysine 200, histidine 220, and 236 to 244 (GLSGTGKTT). Residues lysine 200 and histidine 220 each coordinate Mn(2+). Aspartate 257 is a Mn(2+) binding site. Residues glutamate 285, arginine 322, 442 to 443 (RV), and threonine 448 each bind ATP. Residue arginine 322 participates in substrate binding.

This sequence belongs to the phosphoenolpyruvate carboxykinase (ATP) family. It depends on Mn(2+) as a cofactor.

The protein resides in the cytoplasm. It carries out the reaction oxaloacetate + ATP = phosphoenolpyruvate + ADP + CO2. It functions in the pathway carbohydrate biosynthesis; gluconeogenesis. Involved in the gluconeogenesis. Catalyzes the conversion of oxaloacetate (OAA) to phosphoenolpyruvate (PEP) through direct phosphoryl transfer between the nucleoside triphosphate and OAA. The sequence is that of Phosphoenolpyruvate carboxykinase (ATP) from Rubrobacter xylanophilus (strain DSM 9941 / JCM 11954 / NBRC 16129 / PRD-1).